A 145-amino-acid polypeptide reads, in one-letter code: Mannitol-specific phosphotransferase enzyme IIA component (145 aa).

Residues 4 to 144 (PILKKENIVL…EEILSILNEV (141 aa)) enclose the PTS EIIA type-2 domain. Histidine 64 acts as the Tele-phosphohistidine intermediate in catalysis. Residue histidine 64 is modified to Phosphohistidine; by HPr.

The protein localises to the cytoplasm. Functionally, the phosphoenolpyruvate-dependent sugar phosphotransferase system (sugar PTS), a major carbohydrate active transport system, catalyzes the phosphorylation of incoming sugar substrates concomitantly with their translocation across the cell membrane. The enzyme II CmtAB PTS system is involved in D-mannitol transport. This is Mannitol-specific phosphotransferase enzyme IIA component from Geobacillus stearothermophilus (Bacillus stearothermophilus).